A 400-amino-acid polypeptide reads, in one-letter code: Na(+)/H(+) antiporter NhaA (400 aa).

11 helical membrane-spanning segments follow: residues 26–46 (AGGILLLFSAVVAMLLANSPL), 71–91 (LIHWINDGFMAVFFVLVGMEV), 107–127 (IFPAIAAIGGMVIPAVVYWFI), 137–157 (GWAIPMATDIAFALGIMALLS), 166–186 (IFLLALAIIDDLGAIVVIALF), 189–209 (HGLSVQALIFSAVAIIVLILL), 225–245 (AILWASVLKSGVHATLAGVII), 273–293 (FVILPLFAFANAGVSFAGIDV), 299–319 (PLLLAIASGLIIGKPVGIFGF), 340–360 (IFAVAVLCGIGFTMSMFLASL), and 373–393 (LSRLGILLGSTVSAILGYLFL).

This sequence belongs to the NhaA Na(+)/H(+) (TC 2.A.33) antiporter family.

The protein localises to the cell inner membrane. It carries out the reaction Na(+)(in) + 2 H(+)(out) = Na(+)(out) + 2 H(+)(in). In terms of biological role, na(+)/H(+) antiporter that extrudes sodium in exchange for external protons. This is Na(+)/H(+) antiporter NhaA from Haemophilus influenzae (strain ATCC 51907 / DSM 11121 / KW20 / Rd).